A 329-amino-acid polypeptide reads, in one-letter code: Phenylalanine--tRNA ligase alpha subunit (329 aa).

E253 provides a ligand contact to Mg(2+).

It belongs to the class-II aminoacyl-tRNA synthetase family. Phe-tRNA synthetase alpha subunit type 1 subfamily. As to quaternary structure, tetramer of two alpha and two beta subunits. It depends on Mg(2+) as a cofactor.

It localises to the cytoplasm. The enzyme catalyses tRNA(Phe) + L-phenylalanine + ATP = L-phenylalanyl-tRNA(Phe) + AMP + diphosphate + H(+). The chain is Phenylalanine--tRNA ligase alpha subunit from Coxiella burnetii (strain CbuK_Q154) (Coxiella burnetii (strain Q154)).